A 90-amino-acid chain; its full sequence is MALDQEVKAAIIAKYGKKDGDTGSSEVQIALLSEQIKILTEHLKVFKKDHSSRLGLLKMVGKRKRLLAYLKRTDYARFTDIVNSLGIRAK.

This sequence belongs to the universal ribosomal protein uS15 family. As to quaternary structure, part of the 30S ribosomal subunit. Forms a bridge to the 50S subunit in the 70S ribosome, contacting the 23S rRNA.

One of the primary rRNA binding proteins, it binds directly to 16S rRNA where it helps nucleate assembly of the platform of the 30S subunit by binding and bridging several RNA helices of the 16S rRNA. In terms of biological role, forms an intersubunit bridge (bridge B4) with the 23S rRNA of the 50S subunit in the ribosome. This Aliarcobacter butzleri (strain RM4018) (Arcobacter butzleri) protein is Small ribosomal subunit protein uS15.